We begin with the raw amino-acid sequence, 488 residues long: Ribulose bisphosphate carboxylase large chain (488 aa).

Positions 127 and 177 each coordinate substrate. The active-site Proton acceptor is Lys-179. Lys-181 contributes to the substrate binding site. Positions 205, 207, and 208 each coordinate Mg(2+). Lys-205 is modified (N6-carboxylysine). Residue His-297 is the Proton acceptor of the active site. Substrate is bound by residues Arg-298, His-330, and Ser-382.

The protein belongs to the RuBisCO large chain family. Type I subfamily. In terms of assembly, heterohexadecamer of 8 large chains and 8 small chains. It depends on Mg(2+) as a cofactor.

It localises to the plastid. The protein resides in the chloroplast. The catalysed reaction is 2 (2R)-3-phosphoglycerate + 2 H(+) = D-ribulose 1,5-bisphosphate + CO2 + H2O. It carries out the reaction D-ribulose 1,5-bisphosphate + O2 = 2-phosphoglycolate + (2R)-3-phosphoglycerate + 2 H(+). In terms of biological role, ruBisCO catalyzes two reactions: the carboxylation of D-ribulose 1,5-bisphosphate, the primary event in carbon dioxide fixation, as well as the oxidative fragmentation of the pentose substrate in the photorespiration process. Both reactions occur simultaneously and in competition at the same active site. In Rhodomonas salina (Cryptomonas salina), this protein is Ribulose bisphosphate carboxylase large chain.